A 127-amino-acid chain; its full sequence is Glycine cleavage system H protein (127 aa).

The 82-residue stretch at 24 to 105 folds into the Lipoyl-binding domain; the sequence is TVKVGISDHA…PYEAWLFAVR (82 aa). Lys-65 bears the N6-lipoyllysine mark.

The protein belongs to the GcvH family. As to quaternary structure, the glycine cleavage system is composed of four proteins: P, T, L and H. (R)-lipoate is required as a cofactor.

In terms of biological role, the glycine cleavage system catalyzes the degradation of glycine. The H protein shuttles the methylamine group of glycine from the P protein to the T protein. This chain is Glycine cleavage system H protein, found in Methylococcus capsulatus (strain ATCC 33009 / NCIMB 11132 / Bath).